The following is a 154-amino-acid chain: Cytochrome c-type biogenesis protein CcmE (154 aa).

The Cytoplasmic portion of the chain corresponds to 1–7; that stretch reads MKPRQKR. A helical; Signal-anchor for type II membrane protein transmembrane segment spans residues 8-28; it reads LVLIVGIVAAVGVAAALVLNA. Over 29 to 154 the chain is Periplasmic; sequence FQSNLVFFYS…GETVVKETRP (126 aa). Residues His-121 and Tyr-125 each contribute to the heme site. The interval 131-154 is disordered; sequence AEALQRAGASNQKLGETVVKETRP.

Belongs to the CcmE/CycJ family.

Its subcellular location is the cell inner membrane. In terms of biological role, heme chaperone required for the biogenesis of c-type cytochromes. Transiently binds heme delivered by CcmC and transfers the heme to apo-cytochromes in a process facilitated by CcmF and CcmH. The sequence is that of Cytochrome c-type biogenesis protein CcmE from Methylibium petroleiphilum (strain ATCC BAA-1232 / LMG 22953 / PM1).